Reading from the N-terminus, the 548-residue chain is Ran-binding protein 9 (548 aa).

The span at 1–14 (MSSPPLHGLSSGGH) shows a compositional bias: low complexity. The disordered stretch occupies residues 1–26 (MSSPPLHGLSSGGHLSRDPPPRSWSP). A B30.2/SPRY domain is found at 2–189 (SSPPLHGLSS…VDANFGQSPF (188 aa)). The span at 15–26 (LSRDPPPRSWSP) shows a compositional bias: basic and acidic residues. The region spanning 217 to 249 (WQSMIQRMVSSYLVHHGYCSTAEAFAKSTDQTV) is the LisH domain. A CTLH domain is found at 255-312 (SIKNRQRIQKLVLSGRMGEAIETTQQLYPSLLERNPNLLFTLKVRQFIEMVNGTDSEV).

This sequence belongs to the RANBP9/10 family. In terms of assembly, identified in the CTLH complex that contains at least MAEA, RMND5A (or alternatively its paralog RMND5B), GID8, WDR26, and RANBP9 and/or RANBP10.

The protein localises to the cytoplasm. It localises to the cell membrane. It is found in the nucleus. In terms of biological role, may act as scaffolding protein, and as adapter protein to couple membrane receptors to intracellular signaling pathways. Acts as a mediator of cell spreading and actin cytoskeleton rearrangement. Core component of the CTLH E3 ubiquitin-protein ligase complex that mediates ubiquitination and subsequent proteasomal degradation of target proteins. This chain is Ran-binding protein 9 (ranbp9), found in Xenopus tropicalis (Western clawed frog).